Consider the following 304-residue polypeptide: Choline-phosphate cytidylyltransferase 2 (304 aa).

Residues isoleucine 28–histidine 36 and lysine 66 each bind CTP. Residues lysine 66 and tryptophan 95 each coordinate substrate. Residues histidine 112–aspartate 113, tyrosine 117, and arginine 142–isoleucine 146 each bind CTP. A disordered region spans residues glutamine 266–valine 292. The span at asparagine 275–cysteine 291 shows a compositional bias: acidic residues.

The protein belongs to the cytidylyltransferase family.

The enzyme catalyses phosphocholine + CTP + H(+) = CDP-choline + diphosphate. Its pathway is phospholipid metabolism; phosphatidylcholine biosynthesis; phosphatidylcholine from phosphocholine: step 1/2. In terms of biological role, plays an important role in the biosynthesis of the phospholipid phosphatidylcholine. Catalyzes the formation of CDP-choline. This chain is Choline-phosphate cytidylyltransferase 2, found in Arabidopsis thaliana (Mouse-ear cress).